The sequence spans 425 residues: Transmembrane protein 184A (425 aa).

The next 7 membrane-spanning stretches (helical) occupy residues 51 to 71, 96 to 116, 133 to 153, 189 to 209, 226 to 246, 261 to 281, and 303 to 323; these read LFLT…TALL, LLFI…LLGG, FVIY…SAIM, TLQF…LQAF, VTLV…LFYF, FLTI…LAIL, and LAAG…SLAL. The interval 375 to 425 is disordered; the sequence is QYTQQSTHEAPGPGQGGHPAPSTHPGPASGSGGGKKSRNIEKRMLIPSEDL. The segment covering 392–402 has biased composition (low complexity); sequence HPAPSTHPGPA.

It belongs to the TMEM184 family. As to expression, expressed in testis, pancreas, parotid salivary gland and mammary gland (at protein level).

It is found in the cell membrane. It localises to the cytoplasm. The protein localises to the perinuclear region. Its subcellular location is the cytoplasmic vesicle membrane. The protein resides in the early endosome membrane. It is found in the endosome. It localises to the cytoplasmic vesicle. The protein localises to the secretory vesicle membrane. Acts as a heparin receptor in vascular cells. May be involved in vesicle transport in exocrine cells and Sertoli cells. The sequence is that of Transmembrane protein 184A (Tmem184a) from Mus musculus (Mouse).